The following is a 652-amino-acid chain: Phosphomethylpyrimidine synthase (652 aa).

Disordered stretches follow at residues 1 to 45 (MVSR…SVSA) and 118 to 166 (QRGD…LDGR). Positions 8 to 45 (SSSSTSKAVTSSPSTSSLSSAASSPSVSSSSSSSSVSA) are enriched in low complexity. Residues 134-162 (GASGPGTLGSGTPGSGTPGSGPLGLGGTD) show a composition bias toward gly residues. Substrate-binding positions include N245, M274, Y303, H339, 359-361 (SRG), 400-403 (DGLR), and E439. H443 provides a ligand contact to Zn(2+). Position 466 (Y466) interacts with substrate. Position 507 (H507) interacts with Zn(2+). [4Fe-4S] cluster contacts are provided by C587, C590, and C595.

It belongs to the ThiC family. The cofactor is [4Fe-4S] cluster.

It catalyses the reaction 5-amino-1-(5-phospho-beta-D-ribosyl)imidazole + S-adenosyl-L-methionine = 4-amino-2-methyl-5-(phosphooxymethyl)pyrimidine + CO + 5'-deoxyadenosine + formate + L-methionine + 3 H(+). It functions in the pathway cofactor biosynthesis; thiamine diphosphate biosynthesis. Catalyzes the synthesis of the hydroxymethylpyrimidine phosphate (HMP-P) moiety of thiamine from aminoimidazole ribotide (AIR) in a radical S-adenosyl-L-methionine (SAM)-dependent reaction. This is Phosphomethylpyrimidine synthase from Frankia casuarinae (strain DSM 45818 / CECT 9043 / HFP020203 / CcI3).